The sequence spans 296 residues: Probable porphobilinogen deaminase (296 aa).

Cys-241 carries the post-translational modification S-(dipyrrolylmethanemethyl)cysteine.

This sequence belongs to the HMBS family. Dipyrromethane is required as a cofactor.

The catalysed reaction is 4 porphobilinogen + H2O = hydroxymethylbilane + 4 NH4(+). It participates in porphyrin-containing compound metabolism; protoporphyrin-IX biosynthesis; coproporphyrinogen-III from 5-aminolevulinate: step 2/4. In terms of biological role, tetrapolymerization of the monopyrrole PBG into the hydroxymethylbilane pre-uroporphyrinogen in several discrete steps. This Pyrobaculum calidifontis (strain DSM 21063 / JCM 11548 / VA1) protein is Probable porphobilinogen deaminase.